The following is a 217-amino-acid chain: uncharacterized protein (217 aa).

The protein to M.tuberculosis Rv2926c.

This is an uncharacterized protein from Mycobacterium leprae (strain TN).